The primary structure comprises 424 residues: Serine/threonine-protein kinase H1 (424 aa).

A lipid anchor (N-myristoyl glycine) is attached at Gly-2. The S-palmitoyl cysteine moiety is linked to residue Cys-3. The tract at residues 59–79 (APPCPGVPNTGHTAPPSEPPR) is disordered. The Protein kinase domain maps to 98–355 (YDIKALIGRG…ALQALRHPWV (258 aa)). ATP contacts are provided by residues 104 to 112 (IGRGSFSRV) and Lys-127. Asp-218 (proton acceptor) is an active-site residue. The disordered stretch occupies residues 378 to 408 (RASSRCQSTKSSQSTRSSRSTRSNKSRRVRE). Residues Ser-380 and Ser-381 each carry the phosphoserine; by autocatalysis modification. The segment covering 381 to 398 (SRCQSTKSSQSTRSSRST) has biased composition (low complexity).

The protein belongs to the protein kinase superfamily. CAMK Ser/Thr protein kinase family. As to quaternary structure, homodimer. Post-translationally, autophosphorylated on serine residues. In terms of processing, myristoylated. Required for membrane association. Prerequisite for palmitoylation to occur. Palmitoylated.

Its subcellular location is the golgi apparatus. The protein localises to the cytoplasm. It localises to the cytoskeleton. It is found in the microtubule organizing center. The protein resides in the centrosome. Its subcellular location is the nucleus speckle. The protein localises to the endoplasmic reticulum membrane. It localises to the cell membrane. The enzyme catalyses L-seryl-[protein] + ATP = O-phospho-L-seryl-[protein] + ADP + H(+). It catalyses the reaction L-threonyl-[protein] + ATP = O-phospho-L-threonyl-[protein] + ADP + H(+). Its activity is regulated as follows. Activity depends on Ca(2+) concentration. Serine/threonine protein kinase that may be involved in the regulation of pre-mRNA processing. It may phosphorylate components of nuclear splice factor compartments (SFC), such as non-snRNP splicing factors containing a serine/arginine-rich domain (SR proteins). Reversible phosphorylation of SR proteins may cause their release into the nucleoplasm and change their local concentration, thereby influencing alternative splicing. The chain is Serine/threonine-protein kinase H1 (Pskh1) from Mus musculus (Mouse).